The sequence spans 316 residues: UDP-N-acetylenolpyruvoylglucosamine reductase (316 aa).

Residues 27 to 225 (VGGKAERFYR…KTAINALLKK (199 aa)) form the FAD-binding PCMH-type domain. Arginine 190 is a catalytic residue. Serine 239 serves as the catalytic Proton donor. Glutamate 309 is a catalytic residue.

This sequence belongs to the MurB family. It depends on FAD as a cofactor.

It localises to the cytoplasm. The catalysed reaction is UDP-N-acetyl-alpha-D-muramate + NADP(+) = UDP-N-acetyl-3-O-(1-carboxyvinyl)-alpha-D-glucosamine + NADPH + H(+). The protein operates within cell wall biogenesis; peptidoglycan biosynthesis. In terms of biological role, cell wall formation. This is UDP-N-acetylenolpyruvoylglucosamine reductase from Coxiella burnetii (strain Dugway 5J108-111).